Here is a 303-residue protein sequence, read N- to C-terminus: D-alanine--D-alanine ligase (303 aa).

One can recognise an ATP-grasp domain in the interval lysine 104–glutamate 300. Isoleucine 132 to serine 187 serves as a coordination point for ATP. The Mg(2+) site is built by aspartate 254, glutamate 267, and asparagine 269.

Belongs to the D-alanine--D-alanine ligase family. The cofactor is Mg(2+). Mn(2+) serves as cofactor.

It is found in the cytoplasm. It catalyses the reaction 2 D-alanine + ATP = D-alanyl-D-alanine + ADP + phosphate + H(+). Its pathway is cell wall biogenesis; peptidoglycan biosynthesis. Cell wall formation. In Actinobacillus pleuropneumoniae serotype 5b (strain L20), this protein is D-alanine--D-alanine ligase.